We begin with the raw amino-acid sequence, 449 residues long: Early 53 kDa protein (449 aa).

Residues 1–68 (MNRFFRENNI…CTSPAKPLEH (68 aa)) form a disordered region. Residues 31–42 (NSPPSPVRPPPK) are compositionally biased toward pro residues. The C4-type zinc finger occupies 379-399 (CKLCKKTKLYYKNPVLYCTKC).

The protein resides in the virion. It is found in the host cytoplasm. Its subcellular location is the host nucleus. It localises to the host cell membrane. Functionally, may act as a packaging protein or as a structural component associated with intranuclear baculovirus virion assembly. This chain is Early 53 kDa protein (ME53), found in Autographa californica nuclear polyhedrosis virus (AcMNPV).